The chain runs to 311 residues: Ketoisovalerate oxidoreductase subunit VorB (311 aa).

As to quaternary structure, heterotetramer of one alpha, one beta, one delta and one gamma chain.

It carries out the reaction 3-methyl-2-oxobutanoate + 2 oxidized [2Fe-2S]-[ferredoxin] + CoA = 2-methylpropanoyl-CoA + 2 reduced [2Fe-2S]-[ferredoxin] + CO2 + H(+). The sequence is that of Ketoisovalerate oxidoreductase subunit VorB (vorB) from Pyrococcus horikoshii (strain ATCC 700860 / DSM 12428 / JCM 9974 / NBRC 100139 / OT-3).